The primary structure comprises 529 residues: Delayed-rectifier potassium channel regulatory subunit KCNS1 (529 aa).

Over 1–217 the chain is Cytoplasmic; that stretch reads MLMLLVRGTH…LTMENPGYSL (217 aa). A helical membrane pass occupies residues 218-239; the sequence is PSKLFSCVSISVVLASIAAMCI. Residues 240–270 are Extracellular-facing; the sequence is HSLPEYQAREAAAAVAAVAAGRSPEGVRDDP. A helical membrane pass occupies residues 271-293; the sequence is VLRRLEYFCIAWFSFEVSSRLLL. At 294–304 the chain is on the cytoplasmic side; sequence APSTRNFFCHP. Residues 305–322 traverse the membrane as a helical segment; that stretch reads LNLIDIVSVLPFYLTLLA. At 323–340 the chain is on the extracellular side; it reads GVALGDQGGTGGKELGHL. Residues 341 to 361 traverse the membrane as a helical; Voltage-sensor segment; it reads GKVVQVFRLMRIFRVLKLARH. Over 362 to 376 the chain is Cytoplasmic; it reads STGLRSLGATLKHSY. The chain crosses the membrane as a helical span at residues 377-398; it reads REVGILLLYLAVGVSVFSGVAY. Over 399–411 the chain is Extracellular; it reads TAEKEEDVGFNTI. The helical intramembrane region spans 412-423; that stretch reads PACWWWGTVSMT. The Selectivity filter motif lies at 424 to 429; sequence TVGYGD. The stretch at 424 to 431 is an intramembrane region; that stretch reads TVGYGDVV. The Extracellular portion of the chain corresponds to 432–438; that stretch reads PVTVAGK. The helical transmembrane segment at 439–467 threads the bilayer; sequence LAASGCILGGILVVALPITIIFNKFSHFY. Over 468–529 the chain is Cytoplasmic; sequence RRQKALEAAV…PSEPPHPQMY (62 aa). The tract at residues 496-529 is disordered; that stretch reads SEASLETSRETSQEGRSADLETQAPSEPPHPQMY. A compositionally biased stretch (basic and acidic residues) spans 502-514; sequence TSRETSQEGRSAD.

It belongs to the potassium channel family. S (TC 1.A.1.2) subfamily. Kv9.1/KCNS1 sub-subfamily. Heterotetramer with KCNB1. Heterotetramer with KCNB2. Does not form homomultimers.

Its subcellular location is the cell membrane. Functionally, potassium channel regulatory subunit that modulate the delayed rectifier voltage-gated potassium channel activity of KCNB1 and KCNB2 by altering their kinetics, expression levels, and shifting the half-inactivation potential to more polarized values. While it does not form functional channels on its own, it can form functional heterotetrameric channels with KCNB1 and KCNB2. Each regulatory subunit has unique regulatory properties that can lead to extensive inhibition, significant changes in kinetics, and/or substantial shifts in the voltage dependencies of the inactivation process. This chain is Delayed-rectifier potassium channel regulatory subunit KCNS1, found in Papio anubis (Olive baboon).